Here is a 125-residue protein sequence, read N- to C-terminus: Small ribosomal subunit protein eS8 (125 aa).

The tract at residues 1–20 is disordered; sequence MIWQGRSRRKPSGGFYRKAR.

This sequence belongs to the eukaryotic ribosomal protein eS8 family. Part of the 30S ribosomal subunit.

This is Small ribosomal subunit protein eS8 (rps8e) from Archaeoglobus fulgidus (strain ATCC 49558 / DSM 4304 / JCM 9628 / NBRC 100126 / VC-16).